A 177-amino-acid polypeptide reads, in one-letter code: B-phycoerythrin beta chain (177 aa).

The phycourobilin site is built by Cys-50 and Cys-61. An N4-methylasparagine modification is found at Asn-72. Cys-82 and Cys-158 together coordinate (2R,3E)-phycoerythrobilin.

Belongs to the phycobiliprotein family. In terms of assembly, heteromer of 6 alpha, 6 beta and one gamma chain. In terms of processing, contains two covalently linked phycoerythrobilin chromophores and one covalently linked phycourobilin chromophore.

The protein resides in the plastid. It localises to the chloroplast thylakoid membrane. In terms of biological role, light-harvesting photosynthetic bile pigment-protein from the phycobiliprotein complex. This Porphyridium sordidum (Red alga) protein is B-phycoerythrin beta chain (cpeB).